We begin with the raw amino-acid sequence, 181 residues long: RNA pyrophosphohydrolase (181 aa).

Residues 6-149 (GFRPNVGIIL…KRRVYTRALQ (144 aa)) enclose the Nudix hydrolase domain. A Nudix box motif is present at residues 38-59 (GGIKAQETPEEALFRELEEEVG). Residues 159-181 (GLPRQPPVGRPRRSAPPRGCRRA) form a disordered region. The segment covering 168–181 (RPRRSAPPRGCRRA) has biased composition (basic residues).

It belongs to the Nudix hydrolase family. RppH subfamily. Requires a divalent metal cation as cofactor.

Functionally, accelerates the degradation of transcripts by removing pyrophosphate from the 5'-end of triphosphorylated RNA, leading to a more labile monophosphorylated state that can stimulate subsequent ribonuclease cleavage. This is RNA pyrophosphohydrolase from Alkalilimnicola ehrlichii (strain ATCC BAA-1101 / DSM 17681 / MLHE-1).